The sequence spans 156 residues: Small ribosomal subunit protein uS7 (156 aa).

The protein belongs to the universal ribosomal protein uS7 family. Part of the 30S ribosomal subunit. Contacts proteins S9 and S11.

One of the primary rRNA binding proteins, it binds directly to 16S rRNA where it nucleates assembly of the head domain of the 30S subunit. Is located at the subunit interface close to the decoding center, probably blocks exit of the E-site tRNA. The polypeptide is Small ribosomal subunit protein uS7 (Renibacterium salmoninarum (strain ATCC 33209 / DSM 20767 / JCM 11484 / NBRC 15589 / NCIMB 2235)).